Consider the following 299-residue polypeptide: Taste receptor type 2 member 50 (299 aa).

Position 1 (Met-1) is a topological domain, extracellular. A helical membrane pass occupies residues 2–22; the sequence is IPFLHIFFSVLILVLFVLGNF. The Cytoplasmic segment spans residues 23-55; it reads ANGFIALVNFIDWVKRKKISLADQILTALAVSR. The chain crosses the membrane as a helical span at residues 56 to 76; that stretch reads VGLLWALLLNWYLTELNPAFY. The Extracellular segment spans residues 77-87; it reads SVELRITSYNA. A helical transmembrane segment spans residues 88–108; it reads WVVTNHFSMWLAASLSIFYLL. Residues 109-126 are Cytoplasmic-facing; the sequence is KIANFSNLSFLNLKRRVR. A helical transmembrane segment spans residues 127–147; that stretch reads SIILVILLGSLLFLVCHLLAV. Residues 148-181 are Extracellular-facing; it reads NMDENMWTEEYEGNMTGKMKLRNAAHLSYMTVTT. The N-linked (GlcNAc...) asparagine glycan is linked to Asn-161. The helical transmembrane segment at 182–202 threads the bilayer; the sequence is LWSFIPFMLSLISFLMLIFSL. The Cytoplasmic portion of the chain corresponds to 203 to 229; that stretch reads CKHLKKMQLHGEGSRDPSTTVHIKALQ. The helical transmembrane segment at 230–250 threads the bilayer; the sequence is TLISFLLLCAIFFLFLIISVW. Residues 251-259 are Extracellular-facing; that stretch reads SPRRLQNEP. A helical membrane pass occupies residues 260-280; sequence VFMVCKAVGNIYLSFDSFVLI. At 281–299 the chain is on the cytoplasmic side; the sequence is WRTKKLKHIFLLILCQIRC.

Belongs to the G-protein coupled receptor T2R family.

It is found in the membrane. In terms of biological role, receptor that may play a role in the perception of bitterness and is gustducin-linked. May play a role in sensing the chemical composition of the gastrointestinal content. The activity of this receptor may stimulate alpha gustducin, mediate PLC-beta-2 activation and lead to the gating of TRPM5. The chain is Taste receptor type 2 member 50 (TAS2R50) from Macaca mulatta (Rhesus macaque).